A 175-amino-acid chain; its full sequence is NADH-ubiquinone oxidoreductase chain 6 (175 aa).

5 helical membrane passes run 1 to 21 (MMIY…VGFS), 25 to 45 (SPIY…GIVM), 47 to 67 (FGGS…MLVV), 88 to 108 (TVLS…LYMF), and 149 to 169 (YGVW…LVVL).

The protein belongs to the complex I subunit 6 family. Core subunit of respiratory chain NADH dehydrogenase (Complex I) which is composed of 45 different subunits.

The protein localises to the mitochondrion inner membrane. It carries out the reaction a ubiquinone + NADH + 5 H(+)(in) = a ubiquinol + NAD(+) + 4 H(+)(out). Functionally, core subunit of the mitochondrial membrane respiratory chain NADH dehydrogenase (Complex I) which catalyzes electron transfer from NADH through the respiratory chain, using ubiquinone as an electron acceptor. Essential for the catalytic activity and assembly of complex I. The polypeptide is NADH-ubiquinone oxidoreductase chain 6 (MT-ND6) (Rhinoceros unicornis (Greater Indian rhinoceros)).